The primary structure comprises 1122 residues: MAEQEGSGLQMLLHTLQNSSDKASTLSILQVLGDLLSVGTDRRIYYMISKGGSEALLQTLVDTARSSSPDWDILLPLFRLLAKVGLRDKKFGQKALELEALDVTLILARKNLSHSQNLLHCLWVLRVFASSVTTGAMLGINGAMELLFKVLSPYTRKHTRTIRAATEVLAALLKSSKHLRRAVNRGYVNSLLRLHQDWHSRDVTNTYVTIRHGLLLCLRHIVALRSGREAFLAAQGMETLFSSAQTCLENKNMELVISAVIQILRQCYPASRLPLVTASSAYTFPAPGSTSSELPLNLTEEDFDDDGDEEMDKDSDVEAVKEDDDLETDLSKLSSKPGLDLPEEELAQYDAMCPELSCSFEELEPKCGDDLNNKDTLHANHHHIPSVASLRQHCFNREHSSWRQEREDTVHSSILHMVKTGKSGVPSSSKQRSATNVNQSLQQNGLEIDSSGHDTSDIQAPLEQAAWDMEAISCPRITASFPNSTKPEESIGAAEKLLHTHAKHIPFHDPHLYIANAMRTRSAVGFKTMAFPDLWGHCPPPAAQPMLDRKLGVQRIKILEDIRRLLHPSDVINKVVFSLDEPRPLQGSISNCLMFHSKFESGNLRKAIQVREFEYDLLVNADVNSSQHQQWFYFKVSGMRAAVPYHFNIINCEKPNSQFNYGMQPTLYSVKEALLGRPAWIRTGSDICYYKNHYRQNAATMDGALGKRYYTLTFAVTFPHNEDACYLAYHYPYTYSTLMTHLEILERSIDHREIYFRHDVLCQTLGGNPCPLVTITAFPESNSTEHLEQFRCRPYQVITARVHPGESNASWVMKGTLEFLVSSDPVAKLLRENFVFKIIPMLNPDGVINGNHRCSLRGEDLNRQWLSPQAHLQPTIYHAKGLLHYLSSTGRGPVVFCDFHGHSQKKNVFLYGCSMKETLWQAGCTVGESALLEDVSYRTLPKILDKLAPAFTMNSCSFLVEKSRASTARVVVWREMGVSRSYTMESSYCGCNQGPYQGLQFGTGELEEMGAMYCLGLLILELKSVNCSHKLLARASSLLNADVLEHYLQRCSSSSSNSSNRTSEVDDEPYCMEEIDYSADSSSDAEQNFTELDRQIQECALNKDEEEEEKEEGTGWRRRSVT.

A disordered region spans residues 287–338 (PGSTSSELPLNLTEEDFDDDGDEEMDKDSDVEAVKEDDDLETDLSKLSSKPG). Acidic residues predominate over residues 299–313 (TEEDFDDDGDEEMDK). Positions 731-1021 (YPYTYSTLMT…MYCLGLLILE (291 aa)) constitute a Peptidase M14 domain. Residues histidine 803, glutamate 806, and histidine 900 each contribute to the Zn(2+) site. Glutamate 985 functions as the Proton donor/acceptor in the catalytic mechanism. The interval 1099–1122 (CALNKDEEEEEKEEGTGWRRRSVT) is disordered.

It belongs to the peptidase M14 family. As to quaternary structure, interacts with MYLK. Interacts with TCF4. Requires Zn(2+) as cofactor. Widely expressed at low level. Expressed in eye, muscle, pituitary, testis and to a lower extent in brain.

It localises to the cytoplasm. Its subcellular location is the cytosol. It carries out the reaction (L-glutamyl)(n+1)-gamma-L-glutamyl-L-glutamyl-[protein] + H2O = (L-glutamyl)(n)-gamma-L-glutamyl-L-glutamyl-[protein] + L-glutamate. The catalysed reaction is C-terminal L-alpha-aminoacyl-L-glutamyl-L-glutamyl-[tubulin] + H2O = C-terminal L-alpha-aminoacyl-L-glutamyl-[tubulin] + L-glutamate. Its function is as follows. Metallocarboxypeptidase that mediates deglutamylation of tubulin and non-tubulin target proteins. Catalyzes the removal of polyglutamate side chains present on the gamma-carboxyl group of glutamate residues within the C-terminal tail of tubulin protein. Specifically cleaves tubulin long-side-chains, while it is not able to remove the branching point glutamate. Also catalyzes the removal of polyglutamate residues from the carboxy-terminus of non-tubulin proteins such as MYLK. This is Cytosolic carboxypeptidase 4 from Mus musculus (Mouse).